We begin with the raw amino-acid sequence, 403 residues long: S-adenosylmethionine synthase (403 aa).

Residue histidine 17 participates in ATP binding. Aspartate 19 serves as a coordination point for Mg(2+). Glutamate 45 provides a ligand contact to K(+). Positions 58 and 101 each coordinate L-methionine. The flexible loop stretch occupies residues 101–111; that stretch reads QSPDIAMGVDR. ATP-binding positions include 177–179, 244–245, aspartate 253, 259–260, alanine 276, and lysine 280; these read DGK, RF, and RK. L-methionine is bound at residue aspartate 253. Lysine 284 is an L-methionine binding site.

It belongs to the AdoMet synthase family. Homotetramer; dimer of dimers. The cofactor is Mg(2+). Requires K(+) as cofactor.

It is found in the cytoplasm. It carries out the reaction L-methionine + ATP + H2O = S-adenosyl-L-methionine + phosphate + diphosphate. Its pathway is amino-acid biosynthesis; S-adenosyl-L-methionine biosynthesis; S-adenosyl-L-methionine from L-methionine: step 1/1. Its function is as follows. Catalyzes the formation of S-adenosylmethionine (AdoMet) from methionine and ATP. The overall synthetic reaction is composed of two sequential steps, AdoMet formation and the subsequent tripolyphosphate hydrolysis which occurs prior to release of AdoMet from the enzyme. This is S-adenosylmethionine synthase from Geobacillus kaustophilus (strain HTA426).